Reading from the N-terminus, the 312-residue chain is 2-phospho-L-lactate transferase (312 aa).

Asp50 and Lys89 together coordinate 7,8-didemethyl-8-hydroxy-5-deazariboflavin.

Belongs to the CofD family. Homodimer. Mg(2+) serves as cofactor.

It carries out the reaction (2S)-lactyl-2-diphospho-5'-guanosine + 7,8-didemethyl-8-hydroxy-5-deazariboflavin = oxidized coenzyme F420-0 + GMP + H(+). The protein operates within cofactor biosynthesis; coenzyme F420 biosynthesis. In terms of biological role, catalyzes the transfer of the 2-phospholactate moiety from (2S)-lactyl-2-diphospho-5'-guanosine to 7,8-didemethyl-8-hydroxy-5-deazariboflavin (FO) with the formation of oxidized coenzyme F420-0 and GMP. This chain is 2-phospho-L-lactate transferase, found in Methanococcus vannielii (strain ATCC 35089 / DSM 1224 / JCM 13029 / OCM 148 / SB).